Reading from the N-terminus, the 261-residue chain is Imidazole glycerol phosphate synthase subunit HisF (261 aa).

Residues D11 and D130 contribute to the active site.

Belongs to the HisA/HisF family. Heterodimer of HisH and HisF.

Its subcellular location is the cytoplasm. The catalysed reaction is 5-[(5-phospho-1-deoxy-D-ribulos-1-ylimino)methylamino]-1-(5-phospho-beta-D-ribosyl)imidazole-4-carboxamide + L-glutamine = D-erythro-1-(imidazol-4-yl)glycerol 3-phosphate + 5-amino-1-(5-phospho-beta-D-ribosyl)imidazole-4-carboxamide + L-glutamate + H(+). It functions in the pathway amino-acid biosynthesis; L-histidine biosynthesis; L-histidine from 5-phospho-alpha-D-ribose 1-diphosphate: step 5/9. Its function is as follows. IGPS catalyzes the conversion of PRFAR and glutamine to IGP, AICAR and glutamate. The HisF subunit catalyzes the cyclization activity that produces IGP and AICAR from PRFAR using the ammonia provided by the HisH subunit. The protein is Imidazole glycerol phosphate synthase subunit HisF of Heliobacterium mobile (Heliobacillus mobilis).